The primary structure comprises 359 residues: UDP-3-O-acylglucosamine N-acyltransferase (359 aa).

The active-site Proton acceptor is the H256.

This sequence belongs to the transferase hexapeptide repeat family. LpxD subfamily. In terms of assembly, homotrimer.

The catalysed reaction is a UDP-3-O-[(3R)-3-hydroxyacyl]-alpha-D-glucosamine + a (3R)-hydroxyacyl-[ACP] = a UDP-2-N,3-O-bis[(3R)-3-hydroxyacyl]-alpha-D-glucosamine + holo-[ACP] + H(+). It participates in bacterial outer membrane biogenesis; LPS lipid A biosynthesis. Functionally, catalyzes the N-acylation of UDP-3-O-acylglucosamine using 3-hydroxyacyl-ACP as the acyl donor. Is involved in the biosynthesis of lipid A, a phosphorylated glycolipid that anchors the lipopolysaccharide to the outer membrane of the cell. In Rhodopseudomonas palustris (strain BisB5), this protein is UDP-3-O-acylglucosamine N-acyltransferase.